The primary structure comprises 381 residues: Probable tRNA sulfurtransferase (381 aa).

Residues 55-163 (GECLENLNKV…DDEAFIYHEK (109 aa)) enclose the THUMP domain. Residues 181–182 (LV), lysine 265, glycine 287, and glutamine 296 contribute to the ATP site.

The protein belongs to the ThiI family.

It localises to the cytoplasm. The catalysed reaction is [ThiI sulfur-carrier protein]-S-sulfanyl-L-cysteine + a uridine in tRNA + 2 reduced [2Fe-2S]-[ferredoxin] + ATP + H(+) = [ThiI sulfur-carrier protein]-L-cysteine + a 4-thiouridine in tRNA + 2 oxidized [2Fe-2S]-[ferredoxin] + AMP + diphosphate. It catalyses the reaction [ThiS sulfur-carrier protein]-C-terminal Gly-Gly-AMP + S-sulfanyl-L-cysteinyl-[cysteine desulfurase] + AH2 = [ThiS sulfur-carrier protein]-C-terminal-Gly-aminoethanethioate + L-cysteinyl-[cysteine desulfurase] + A + AMP + 2 H(+). Its pathway is cofactor biosynthesis; thiamine diphosphate biosynthesis. Its function is as follows. Catalyzes the ATP-dependent transfer of a sulfur to tRNA to produce 4-thiouridine in position 8 of tRNAs, which functions as a near-UV photosensor. Also catalyzes the transfer of sulfur to the sulfur carrier protein ThiS, forming ThiS-thiocarboxylate. This is a step in the synthesis of thiazole, in the thiamine biosynthesis pathway. The sulfur is donated as persulfide by IscS. In Methanobrevibacter smithii (strain ATCC 35061 / DSM 861 / OCM 144 / PS), this protein is Probable tRNA sulfurtransferase.